A 337-amino-acid polypeptide reads, in one-letter code: tRNA N6-adenosine threonylcarbamoyltransferase (337 aa).

Fe cation-binding residues include His-111 and His-115. Substrate-binding positions include 134–138, Asp-167, Gly-180, and Asn-272; that span reads LVSGG. Residue Asp-300 coordinates Fe cation.

This sequence belongs to the KAE1 / TsaD family. Fe(2+) serves as cofactor.

Its subcellular location is the cytoplasm. The enzyme catalyses L-threonylcarbamoyladenylate + adenosine(37) in tRNA = N(6)-L-threonylcarbamoyladenosine(37) in tRNA + AMP + H(+). In terms of biological role, required for the formation of a threonylcarbamoyl group on adenosine at position 37 (t(6)A37) in tRNAs that read codons beginning with adenine. Is involved in the transfer of the threonylcarbamoyl moiety of threonylcarbamoyl-AMP (TC-AMP) to the N6 group of A37, together with TsaE and TsaB. TsaD likely plays a direct catalytic role in this reaction. The chain is tRNA N6-adenosine threonylcarbamoyltransferase from Escherichia coli O127:H6 (strain E2348/69 / EPEC).